A 517-amino-acid polypeptide reads, in one-letter code: Rop guanine nucleotide exchange factor 9 (517 aa).

Disordered stretches follow at residues 16-76 and 428-517; these read NLDR…SETE and GEET…KDRH. Positions 39–63 are enriched in polar residues; that stretch reads MPESQTQDSLGGSPVETSRPMTSRL. The PRONE domain occupies 65-429; sequence SRRQDKQQSE…SLARKQCTGE (365 aa). Residues 66–76 are compositionally biased toward basic and acidic residues; it reads RRQDKQQSETE. Polar residues predominate over residues 440–452; sequence ETDSASAGSSNYS.

Interacts with ARAC11/ROP1 and ARAC10/ROP11. Interacts with PRK6. As to expression, expressed in pollen grains and pollen tubes.

It is found in the cell membrane. Its function is as follows. Guanine-nucleotide exchange factor (GEF) that acts as an activator of Rop (Rho of plants) GTPases by promoting the exchange of GDP for GTP. This chain is Rop guanine nucleotide exchange factor 9, found in Arabidopsis thaliana (Mouse-ear cress).